Reading from the N-terminus, the 486-residue chain is Secreted protein C (486 aa).

The N-terminal stretch at 1–22 (MKINIILLFVGLILAFAVLSNA) is a signal peptide. The interval 30-332 (GVNPFDNNNS…SGSHGGSSSH (303 aa)) is disordered. N-linked (GlcNAc...) asparagine glycosylation is present at Asn37. The span at 41 to 60 (SGSGSGSGGGSSSSGSGTGQ) shows a compositional bias: gly residues. Residues 61-318 (SSGTVSSSGS…TGSSEYSSSS (258 aa)) are compositionally biased toward low complexity. Residues Asn73, Asn74, Asn83, Asn112, Asn129, Asn149, and Asn174 are each glycosylated (N-linked (GlcNAc...) asparagine).

It belongs to the Sct family.

It is found in the secreted. The chain is Secreted protein C from Dictyostelium discoideum (Social amoeba).